A 442-amino-acid chain; its full sequence is Terpene cyclase aneC (442 aa).

Mg(2+) is bound by residues aspartate 196, asparagine 327, serine 331, and glutamate 335. Arginine 419 and tyrosine 420 together coordinate (2E,6E)-farnesyl diphosphate.

It belongs to the terpene synthase family. Homodimer. Mg(2+) is required as a cofactor.

It carries out the reaction (2E,6E)-farnesyl diphosphate = dauca-4,7-diene + diphosphate. It functions in the pathway secondary metabolite biosynthesis. Functionally, terpene cyclase; part of the gene cluster that mediates the biosynthesis of aculenes, a unique type of norsesquiterpenes that contain a nordaucane skeleton linked to an L-proline moiety and are of mixed biosynthetic origin. The pathway begins with the synthesis of dauca-4,7-diene by the terpene cyclase aneC using farnesyl pyrophosphate (FPP) as substrate. The cytochrome P450 monooxygenase aneF then performs the initial oxidation at C-12 of dauca-4,7-diene to yield asperaculane D. Asperaculane D is substrate of the cytochrome P450 monooxygenase aneD for C-10 hydroxylation to yield asperaculane E. The cytochrome P450 monooxygenase aneG then converts asperaculane E into aculene D via C-2 oxidation. The monomodular nonribosomal peptide synthtase aneB adenylates L-proline and the thiohydrolase aneE transfers this activated L-proline derivative to aculenes D and C to produce respectively aculenes B and A. The dioxygenase aneA converts aculene D into aculene C, and aculene B into aculene A by introducing the 5,6-alkene moiety. Asperculanes A, B, C and F, as well as 14-prolyl asperculane C, might be shunt products of the pathway. This Aspergillus aculeatus (strain ATCC 16872 / CBS 172.66 / WB 5094) protein is Terpene cyclase aneC.